The chain runs to 754 residues: MGGLSAMQRRIDLLVEGGDEYDACSHFRSVVMWDKSLRPPLPRAEPRIRVLHDDVTVDRYGWLRDRENPDVRAYLEAENSYAEQATAHLRRLKTELIAEIEGRQPCEGATPPFQVGPFDYFQGHERGLPHPVWWRRPVTGGSAELVLDPNAIPGADVFYWLGVFEPSDDGRYLAFSVDLIGAERYELRVRDMSDGRDVWRDAGSVGQVVWAADNHTLFFTRERPDRRQHHQIVRLNVGRGNSEVVFEEANERLAVLVRRSQSGAWLFLDVLTTSDMSSYVQRGAAEVWCLPADEPGGQWRRIVMRELGHQIYAEHWYDRFLFRVDDAGPYWRLVSAPIDDPSPSRWEEVVPHRAGVTIDEIHVLEQHLVLLEREGLRPRLISRNRSGRVGAVIVPDEPSCTIRVGLSAGGCYSAARHPFRSSKLTYSVSSFVTPDTFIEHDFANDRSVVLCEARVPGYDATQYLATVVMAEAEDGVQVPISLVARRDRTSPGPVLLSVYGCYGIPRLPSFLAWPSSMTARLSLLDREVAFGIVHVRGGGELGRPWHDAATRDQKRITHTDLISATEGLIERGFATRDGVVIEGKSGGGGTVLATAVFRPNLFRAVVAEVPLADIIDTQLDSTMPYTLKETAEYGDPQDAYEYRYLRSYDPYYNLSPERSLPPTYVDAALDDGQVIYYQPARYVAQRRSCATDRDPDLVFRIRMVGGHSGPSHGPGIAEQAAFRMAWVLDQLRSHAPPPSRKARSAARRSTDPVR.

Residues Ser585 and His707 each act as charge relay system in the active site. The interval 733–754 is disordered; it reads SHAPPPSRKARSAARRSTDPVR.

Belongs to the peptidase S9A family.

This is an uncharacterized protein from Sinorhizobium fredii (strain NBRC 101917 / NGR234).